We begin with the raw amino-acid sequence, 87 residues long: Large ribosomal subunit protein bL27 (87 aa).

The segment at 1–21 (MAHKKAGGSSRNGRDSESKRL) is disordered.

Belongs to the bacterial ribosomal protein bL27 family.

This chain is Large ribosomal subunit protein bL27, found in Burkholderia ambifaria (strain MC40-6).